Reading from the N-terminus, the 776-residue chain is MTAETRILELRAELDQHNYRYYVLDEPSVPDAEYDRLFNELKALEAEHPHLVTPDSPTQRVGGAALAAFSQVRHEVPMLSLGNAFEEADLREFGRRVVEGLDQPGAVDYSCEPKLDGLAVSLLYRDGQLVQGATRGDGTTGEDISANVRTVRNIPLKLQGKGWPAVLEVRGEVYMSKAGFDRLNAAQAEAGGKTFANPRNAAAGSLRQLDSKITASRPLEFCCYGVGQLSESIGDSHIGILEQLKAWGLPISRELKHAAGIEECLAYYRDIGERRNSLPYEIDGVVFKVNSLAAQRELGFRAREPRWAIAHKFPAMEELTEVLDVEFQVGRTGAVTPVARLKPVKVAGVTVSNATLHNMDEIARLGLRIGDTVIIRRAGDVIPQVMQVVLERRPQDARPVEVPSECPVCGSQVERTQLVKRSKGKETTSEGAVYRCVGRLACGAQLKQAIIHYVSRRAMDIDGLGEKSVEQLVDEGLIGSPADLYKLQFEQVVGLEGFAEVSTQKLLDAIEASKRPSLARFIYALGIPDVGEETAKVLARSLGSLARVQQALPQVLTYLPDIGLEVAYEIHNFFEDEHNQKVIQQLLDSGMQLQDEGELAAEFAASTTLAGMIAKLDIASVGPTGAEKLVAKLDSLDKIIAADGIDLRQALAAKQADAVREFFKDEANQKLARDIEAQLLAFGMHWSSEKKVAEGLPLAGQTWVLTGTLERMSRDIAKDKLESLGAKVAGSVSGKTHCVVAGPGAGSKLAKAAELGVKVLDEDAFVTFLAEQGIAV.

Residues 31-35, 80-81, and Glu-112 each bind NAD(+); these read DAEYD and SL. Residue Lys-114 is the N6-AMP-lysine intermediate of the active site. Residues Arg-135, Glu-172, Lys-288, and Lys-312 each contribute to the NAD(+) site. Zn(2+)-binding residues include Cys-406, Cys-409, Cys-436, and Cys-442. One can recognise a BRCT domain in the interval 693–776; that stretch reads AEGLPLAGQT…TFLAEQGIAV (84 aa).

The protein belongs to the NAD-dependent DNA ligase family. LigA subfamily. Mg(2+) serves as cofactor. It depends on Mn(2+) as a cofactor.

It carries out the reaction NAD(+) + (deoxyribonucleotide)n-3'-hydroxyl + 5'-phospho-(deoxyribonucleotide)m = (deoxyribonucleotide)n+m + AMP + beta-nicotinamide D-nucleotide.. DNA ligase that catalyzes the formation of phosphodiester linkages between 5'-phosphoryl and 3'-hydroxyl groups in double-stranded DNA using NAD as a coenzyme and as the energy source for the reaction. It is essential for DNA replication and repair of damaged DNA. The protein is DNA ligase of Pseudomonas putida (strain ATCC 700007 / DSM 6899 / JCM 31910 / BCRC 17059 / LMG 24140 / F1).